The following is a 198-amino-acid chain: Recombination protein RecR (198 aa).

Residues Cys57–Cys72 form a C4-type zinc finger. A Toprim domain is found at Thr80–Pro175.

The protein belongs to the RecR family.

In terms of biological role, may play a role in DNA repair. It seems to be involved in an RecBC-independent recombinational process of DNA repair. It may act with RecF and RecO. The polypeptide is Recombination protein RecR (Geobacillus sp. (strain WCH70)).